The following is a 562-amino-acid chain: Tubby-related protein 2 (562 aa).

Positions 1-81 are disordered; sequence MDREGPRGPR…RRGEERFQSD (81 aa). Residues 35-46 show a composition bias toward basic and acidic residues; the sequence is QKLEQQRQLFEK. 3 positions are modified to phosphoserine: S152, S153, and S155. The interval 179 to 294 is disordered; it reads LRRGWLASPG…SNHNAWNMTC (116 aa). T211 carries the post-translational modification Phosphothreonine. S213 carries the post-translational modification Phosphoserine. Positions 225-240 are enriched in basic and acidic residues; the sequence is DGDHGDLAPCKVEENT. The span at 285–294 shows a compositional bias: polar residues; the sequence is SNHNAWNMTC.

It belongs to the TUB family. Expressed in retina and testis.

It is found in the cytoplasm. Its subcellular location is the secreted. The chain is Tubby-related protein 2 (Tulp2) from Mus musculus (Mouse).